A 328-amino-acid polypeptide reads, in one-letter code: Arylacetonitrilase (328 aa).

The region spanning valine 5–phenylalanine 278 is the CN hydrolase domain. The active-site Proton acceptor is the glutamate 45. The active site involves lysine 125. Catalysis depends on cysteine 160, which acts as the Nucleophile.

This sequence belongs to the carbon-nitrogen hydrolase superfamily. Nitrilase family.

The catalysed reaction is a nitrile + 2 H2O = a carboxylate + NH4(+). The enzyme catalyses 4-chlorophenylacetonitrile + 2 H2O = 4-chlorophenylacetate + NH4(+). Its function is as follows. Nitrilase that hydrolyzes preferentially phenylacetonitrile, (R,S)-mandelonitrile, and 3-indolylacetonitrile. This chain is Arylacetonitrilase, found in Aspergillus niger (strain ATCC MYA-4892 / CBS 513.88 / FGSC A1513).